The following is a 441-amino-acid chain: Ribosomal protein uS12 methylthiotransferase RimO (441 aa).

The MTTase N-terminal domain maps to 8–118 (PKIGFVSLGC…VLQHVHHYVP (111 aa)). Residues Cys17, Cys53, Cys82, Cys150, Cys154, and Cys157 each contribute to the [4Fe-4S] cluster site. The region spanning 136–373 (LTPRHYAYLK…MQLQQQISAE (238 aa)) is the Radical SAM core domain. The TRAM domain occupies 376–441 (QEKVGREILV…DEYDLWGSRV (66 aa)).

This sequence belongs to the methylthiotransferase family. RimO subfamily. [4Fe-4S] cluster serves as cofactor.

The protein resides in the cytoplasm. The catalysed reaction is L-aspartate(89)-[ribosomal protein uS12]-hydrogen + (sulfur carrier)-SH + AH2 + 2 S-adenosyl-L-methionine = 3-methylsulfanyl-L-aspartate(89)-[ribosomal protein uS12]-hydrogen + (sulfur carrier)-H + 5'-deoxyadenosine + L-methionine + A + S-adenosyl-L-homocysteine + 2 H(+). Functionally, catalyzes the methylthiolation of an aspartic acid residue of ribosomal protein uS12. The sequence is that of Ribosomal protein uS12 methylthiotransferase RimO from Salmonella typhi.